The primary structure comprises 309 residues: Probable manganese-dependent inorganic pyrophosphatase (309 aa).

Residues histidine 9, aspartate 13, aspartate 15, aspartate 75, histidine 97, and aspartate 149 each contribute to the Mn(2+) site.

This sequence belongs to the PPase class C family. It depends on Mn(2+) as a cofactor.

The protein localises to the cytoplasm. It carries out the reaction diphosphate + H2O = 2 phosphate + H(+). In Bacillus anthracis (strain CDC 684 / NRRL 3495), this protein is Probable manganese-dependent inorganic pyrophosphatase.